Consider the following 791-residue polypeptide: Ataxin-1 (791 aa).

Over residues 1-30 (MKSNQERSNECLPPKKREIPATSRPSEEKA) the composition is skewed to basic and acidic residues. Residues 1-36 (MKSNQERSNECLPPKKREIPATSRPSEEKATALPSD) are disordered. A Glycyl lysine isopeptide (Lys-Gly) (interchain with G-Cter in SUMO) cross-link involves residue K16. Phosphoserine is present on residues S81 and S87. Disordered regions lie at residues 187-240 (SQAP…TSPP) and 298-402 (EVLN…HRSY). A Glycyl lysine isopeptide (Lys-Gly) (interchain with G-Cter in SUMO) cross-link involves residue K193. S213 is subject to Phosphoserine. The residue at position 218 (T218) is a Phosphothreonine. Composition is skewed to polar residues over residues 219–236 (QQNQ…SGRA), 312–327 (ASSS…SSKS), and 362–388 (PNSS…TLND). S229 bears the Phosphoserine mark. Positions 470–580 (VGSPDMDTPG…TEDFIQSAEI (111 aa)) are self-association. Residues 514–791 (LVTQAAYPAM…CIEGRSNVGK (278 aa)) form an interaction with USP7 region. The tract at residues 516-742 (TQAAYPAMVQ…FLSKIEPSKP (227 aa)) is RNA-binding. The 132-residue stretch at 538–669 (SPTTASPTLP…SLTLKNLKNG (132 aa)) folds into the AXH domain. Residues K585, K672, and K721 each participate in a glycyl lysine isopeptide (Lys-Gly) (interchain with G-Cter in SUMO) cross-link. The disordered stretch occupies residues 736–774 (KIEPSKPTATRKRRWSAPETRKLEKSEDEPPLTLPKPSL). Position 751 is a phosphoserine (S751). The Nuclear localization signal signature appears at 770-773 (PKPS).

It belongs to the ATXN1 family. In terms of assembly, homooligomer. Interacts with PQBP1, UBQLN4 and USP7. Interacts with ANP32A. Interacts with CIC. Directly interacts with RBPJ; this interaction is disrupted in the presence of Notch intracellular domain. Interacts with ATXN1L; competes with ATXN1L for RBPJ-binding. Found in a complex with CIC and ATXN1L. Post-translationally, ubiquitinated by UBE3A, leading to its degradation by the proteasome. The presence of poly-Gln repeats in trangenic models developed to replicate phenotypes of the spinocerebellar ataxia 1 disease (SCA1) impair ubiquitination and degradation, leading to accumulation of Atxn1 in neurons and subsequent toxicity. In terms of processing, sumoylation is dependent on nuclear localization and phosphorylation at Ser-751. In terms of tissue distribution, expressed in the cortex and hypothalamus (at protein level). Widely expressed. In brain, the pattern of distribution is limited to neuron populations.

It localises to the cytoplasm. It is found in the nucleus. Chromatin-binding factor that repress Notch signaling in the absence of Notch intracellular domain by acting as a CBF1 corepressor. Binds to the HEY promoter and might assist, along with NCOR2, RBPJ-mediated repression. May be involved in RNA metabolism. In concert with CIC and ATXN1L, involved in brain development. The chain is Ataxin-1 (Atxn1) from Mus musculus (Mouse).